Here is a 393-residue protein sequence, read N- to C-terminus: Acetylornithine aminotransferase (393 aa).

Residues 100–101 and phenylalanine 133 each bind pyridoxal 5'-phosphate; that span reads GA. Arginine 136 is a N(2)-acetyl-L-ornithine binding site. 218–221 is a pyridoxal 5'-phosphate binding site; that stretch reads DEVQ. Residue lysine 247 is modified to N6-(pyridoxal phosphate)lysine. Serine 274 contacts N(2)-acetyl-L-ornithine. Threonine 275 provides a ligand contact to pyridoxal 5'-phosphate.

It belongs to the class-III pyridoxal-phosphate-dependent aminotransferase family. ArgD subfamily. As to quaternary structure, homodimer. The cofactor is pyridoxal 5'-phosphate.

Its subcellular location is the cytoplasm. It catalyses the reaction N(2)-acetyl-L-ornithine + 2-oxoglutarate = N-acetyl-L-glutamate 5-semialdehyde + L-glutamate. Its pathway is amino-acid biosynthesis; L-arginine biosynthesis; N(2)-acetyl-L-ornithine from L-glutamate: step 4/4. The chain is Acetylornithine aminotransferase from Caldanaerobacter subterraneus subsp. tengcongensis (strain DSM 15242 / JCM 11007 / NBRC 100824 / MB4) (Thermoanaerobacter tengcongensis).